The following is a 322-amino-acid chain: ATP-dependent 6-phosphofructokinase (322 aa).

Gly-11 is an ATP binding site. 21 to 25 provides a ligand contact to ADP; it reads RAVTR. Residues 72–73 and 102–105 contribute to the ATP site; these read RC and GDGS. Asp-103 contacts Mg(2+). 127–129 contributes to the substrate binding site; sequence TID. The active-site Proton acceptor is the Asp-129. Residue Arg-156 coordinates ADP. Substrate-binding positions include Arg-164 and 171–173; that span reads MGR. ADP is bound by residues 187-189, Arg-213, and 215-217; these read GAE and KKH. Substrate-binding positions include Glu-224, Arg-245, and 251 to 254; that span reads HIQR.

It belongs to the phosphofructokinase type A (PFKA) family. ATP-dependent PFK group I subfamily. Prokaryotic clade 'B1' sub-subfamily. Homotetramer. It depends on Mg(2+) as a cofactor.

The protein resides in the cytoplasm. It catalyses the reaction beta-D-fructose 6-phosphate + ATP = beta-D-fructose 1,6-bisphosphate + ADP + H(+). It functions in the pathway carbohydrate degradation; glycolysis; D-glyceraldehyde 3-phosphate and glycerone phosphate from D-glucose: step 3/4. With respect to regulation, allosterically activated by ADP and other diphosphonucleosides, and allosterically inhibited by phosphoenolpyruvate. Functionally, catalyzes the phosphorylation of D-fructose 6-phosphate to fructose 1,6-bisphosphate by ATP, the first committing step of glycolysis. The protein is ATP-dependent 6-phosphofructokinase of Staphylococcus epidermidis (strain ATCC 35984 / DSM 28319 / BCRC 17069 / CCUG 31568 / BM 3577 / RP62A).